A 474-amino-acid polypeptide reads, in one-letter code: tRNA modification GTPase MnmE (474 aa).

Arginine 23, glutamate 86, and lysine 125 together coordinate (6S)-5-formyl-5,6,7,8-tetrahydrofolate. A TrmE-type G domain is found at 221-396 (GIPVAIVGEP…LKEKLLEYVN (176 aa)). Position 231 (asparagine 231) interacts with K(+). GTP is bound by residues 231–236 (NVGKST), 250–256 (SEIAGTT), and 275–278 (DTAG). Residue serine 235 participates in Mg(2+) binding. K(+) contacts are provided by serine 250, isoleucine 252, and threonine 255. Threonine 256 serves as a coordination point for Mg(2+). Residue lysine 474 participates in (6S)-5-formyl-5,6,7,8-tetrahydrofolate binding.

This sequence belongs to the TRAFAC class TrmE-Era-EngA-EngB-Septin-like GTPase superfamily. TrmE GTPase family. In terms of assembly, homodimer. Heterotetramer of two MnmE and two MnmG subunits. The cofactor is K(+).

The protein resides in the cytoplasm. Its function is as follows. Exhibits a very high intrinsic GTPase hydrolysis rate. Involved in the addition of a carboxymethylaminomethyl (cmnm) group at the wobble position (U34) of certain tRNAs, forming tRNA-cmnm(5)s(2)U34. This is tRNA modification GTPase MnmE from Christiangramia forsetii (strain DSM 17595 / CGMCC 1.15422 / KT0803) (Gramella forsetii).